Reading from the N-terminus, the 933-residue chain is Protein inturned (933 aa).

A disordered region spans residues 1 to 54 (MASLPLCGSVRSPEGLPGDPSSQEDRQDYDPEDPVSGSGSYSPTSTDSNDLEPE). Polar residues predominate over residues 37–48 (GSGSYSPTSTDS). A PDZ domain is found at 186 to 264 (LVGIIHQTKW…PMQVKLTFEN (79 aa)). Ser675 is subject to Phosphoserine. The disordered stretch occupies residues 703–742 (LKTRKPSPSRSGGPDSGLEGEGVGLSPHTTESQGSHGSEE). The span at 710–719 (PSRSGGPDSG) shows a compositional bias: low complexity. Polar residues predominate over residues 729–738 (PHTTESQGSH).

The protein belongs to the inturned family. Component of the CPLANE (ciliogenesis and planar polarity effectors) complex, composed of INTU, FUZ and WDPCP. Interacts with CPLANE1. Interacts with NPHP4 and DAAM1; INTU is mediating the interaction between NPHP4 and DAAM1.

The protein localises to the cytoplasm. The protein resides in the cell surface. It is found in the cytoskeleton. It localises to the cilium basal body. Its subcellular location is the microtubule organizing center. The protein localises to the centrosome. The protein resides in the centriole. Plays a key role in ciliogenesis and embryonic development. Regulator of cilia formation by controlling the organization of the apical actin cytoskeleton and the positioning of the basal bodies at the apical cell surface, which in turn is essential for the normal orientation of elongating ciliary microtubules. Plays a key role in definition of cell polarity via its role in ciliogenesis but not via conversion extension. Has an indirect effect on hedgehog signaling. Proposed to function as core component of the CPLANE (ciliogenesis and planar polarity effectors) complex involved in the recruitment of peripheral IFT-A proteins to basal bodies. Required for recruitment of CPLANE2 to the mother centriole. Binds phosphatidylinositol 3-phosphate with highest affinity, followed by phosphatidylinositol 4-phosphate and phosphatidylinositol 5-phosphate. The chain is Protein inturned (INTU) from Bos taurus (Bovine).